Reading from the N-terminus, the 279-residue chain is Dehydrogenase/reductase SDR family member 4 (279 aa).

An NADP(+)-binding site is contributed by 37–61 (LVTASTDGIGLAIARRLAQDGAHVV). An N6-acetyllysine; alternate modification is found at K93. K93 carries the post-translational modification N6-succinyllysine; alternate. S170 contributes to the substrate binding site. The active-site Proton acceptor is the Y183. Residue K187 participates in NADP(+) binding. K217 is subject to N6-acetyllysine; alternate. Position 217 is an N6-succinyllysine; alternate (K217). S221 bears the Phosphoserine mark. An N6-succinyllysine mark is found at K228 and K235. The Peroxisomal targeting signal signature appears at 277–279 (SRL).

This sequence belongs to the short-chain dehydrogenases/reductases (SDR) family. As to quaternary structure, homotetramer. In terms of tissue distribution, detected in heart, kidney, liver and small intestine. Detected at lower levels in brain, lung, stomach and spleen.

It is found in the peroxisome. It catalyses the reaction a secondary alcohol + NADP(+) = a ketone + NADPH + H(+). It carries out the reaction 3alpha-hydroxy-5beta-pregnan-20-one + NADP(+) = 5beta-pregnan-3,20-dione + NADPH + H(+). The catalysed reaction is 5beta-dihydrotestosterone + NADPH + H(+) = 5beta-androstane-3alpha,17beta-diol + NADP(+). The enzyme catalyses all-trans-retinol + NADP(+) = all-trans-retinal + NADPH + H(+). It catalyses the reaction isatin + NADPH + H(+) = 3-hydroxyindolin-2-one + NADP(+). With respect to regulation, inhibited by kaempferol, quercetin, genistein and myristic acid. Its function is as follows. NADPH-dependent oxidoreductase which catalyzes the reduction of a variety of compounds bearing carbonyl groups including ketosteroids, alpha-dicarbonyl compounds, aldehydes, aromatic ketones and quinones. Reduces all-trans-retinal and 9-cis retinal. Reduces 3-ketosteroids and benzil into 3alpha-hydroxysteroids and S-benzoin, respectively, in contrast to the stereoselectivity of primates DHRS4s which produce 3beta-hydroxysteroids and R-benzoin. In the reverse reaction, catalyzes the NADP-dependent oxidation of 3alpha-hydroxysteroids and alcohol, but with much lower efficiency. Involved in the metabolism of 3alpha-hydroxysteroids, retinoid, isatin and xenobiotic carbonyl compounds. This chain is Dehydrogenase/reductase SDR family member 4 (DHRS4), found in Sus scrofa (Pig).